The following is a 906-amino-acid chain: Protein translocase subunit SecA (906 aa).

ATP-binding positions include Gln86, 104-108, and Asp499; that span reads GEGKT. The disordered stretch occupies residues 862–886; sequence KPVVSRIDPKDRNPDDPTSWGRVSR. The Zn(2+) site is built by Cys890, Cys892, Cys901, and His902.

The protein belongs to the SecA family. Monomer and homodimer. Part of the essential Sec protein translocation apparatus which comprises SecA, SecYEG and auxiliary proteins SecDF-YajC and YidC. Requires Zn(2+) as cofactor.

The protein localises to the cell inner membrane. The protein resides in the cytoplasm. It catalyses the reaction ATP + H2O + cellular proteinSide 1 = ADP + phosphate + cellular proteinSide 2.. Its function is as follows. Part of the Sec protein translocase complex. Interacts with the SecYEG preprotein conducting channel. Has a central role in coupling the hydrolysis of ATP to the transfer of proteins into and across the cell membrane, serving both as a receptor for the preprotein-SecB complex and as an ATP-driven molecular motor driving the stepwise translocation of polypeptide chains across the membrane. The protein is Protein translocase subunit SecA of Rickettsia africae (strain ESF-5).